The chain runs to 106 residues: Small cardioactive peptide-related peptide (106 aa).

An N-terminal signal peptide occupies residues 1–20 (MFCKHLSFVAITICFLLVLA). Positions 21–41 (KTENEIQQKNIKFDQRTWRNM) are cleaved as a propeptide — amino-terminal spacer peptide. Position 52 is a glutamine amide (glutamine 52). The propeptide at 55–106 (SDNQPDYTCCGMPLTKYVGICPIGMECCPGLKKVLQKSGQRTIYSVCVADAY) is carboxy-terminal spacer peptide.

Expression is seen in the peripheral and central nervous systems in tissues such as the brain, the inferior buccal ganglion, the gastric ganglion, the olfactory lobe, the peduncle lobe and the optic lobe. Expression in the brain is distributed in the median inferior frontal lobe, the superior buccal lobe, the prebranchial lobe and the pedal lobe. Not expressed in the vasomotor lobe or the palliovisceral lobe that controls the cardiac system.

It localises to the secreted. Evokes contractions in the radula protractor muscle, and may regulate feeding behavior and gut motility by controlling muscle contraction of the buccal mass. The sequence is that of Small cardioactive peptide-related peptide from Octopus vulgaris (Common octopus).